The chain runs to 311 residues: Acetyl-coenzyme A carboxylase carboxyl transferase subunit alpha (311 aa).

The CoA carboxyltransferase C-terminal domain occupies 36–286; the sequence is ELKKEVERVY…VNYFLKSLEE (251 aa).

Belongs to the AccA family. In terms of assembly, acetyl-CoA carboxylase is a heterohexamer composed of biotin carboxyl carrier protein (AccB), biotin carboxylase (AccC) and two subunits each of ACCase subunit alpha (AccA) and ACCase subunit beta (AccD).

It localises to the cytoplasm. The enzyme catalyses N(6)-carboxybiotinyl-L-lysyl-[protein] + acetyl-CoA = N(6)-biotinyl-L-lysyl-[protein] + malonyl-CoA. It functions in the pathway lipid metabolism; malonyl-CoA biosynthesis; malonyl-CoA from acetyl-CoA: step 1/1. Component of the acetyl coenzyme A carboxylase (ACC) complex. First, biotin carboxylase catalyzes the carboxylation of biotin on its carrier protein (BCCP) and then the CO(2) group is transferred by the carboxyltransferase to acetyl-CoA to form malonyl-CoA. The sequence is that of Acetyl-coenzyme A carboxylase carboxyl transferase subunit alpha from Wolinella succinogenes (strain ATCC 29543 / DSM 1740 / CCUG 13145 / JCM 31913 / LMG 7466 / NCTC 11488 / FDC 602W) (Vibrio succinogenes).